The sequence spans 835 residues: Microcephalin (835 aa).

Positions 1–93 (MAAPILKDVV…AHIDESLFPA (93 aa)) constitute a BRCT 1 domain. Residues Ser279, Ser287, Ser296, and Ser333 each carry the phosphoserine modification. Disordered regions lie at residues 332-376 (LSPT…RKRS) and 417-442 (SPDNLKERNSENLPPESQLPSSPAQF). Thr335 bears the Phosphothreonine mark. Residues 343 to 361 (LLIHSRPRSSSVKRKRVSH) show a composition bias toward basic residues. Residue Ser548 is modified to Phosphoserine. Residues 555–583 (AVDLKSTQNKGTTSKISNSSEGEAQSEHE) form a disordered region. The segment covering 559–577 (KSTQNKGTTSKISNSSEGE) has biased composition (polar residues). 2 BRCT domains span residues 640-730 (SGRG…PFEL) and 751-833 (YRGT…NYLL).

In terms of assembly, interacts with CDC27 and maybe other components of the APC/C complex. Interacts with histone variant H2AX under DNA damage conditions.

It is found in the cytoplasm. The protein localises to the cytoskeleton. Its subcellular location is the microtubule organizing center. The protein resides in the centrosome. In terms of biological role, implicated in chromosome condensation and DNA damage induced cellular responses. May play a role in neurogenesis and regulation of the size of the cerebral cortex. This Pan troglodytes (Chimpanzee) protein is Microcephalin.